A 232-amino-acid chain; its full sequence is Phosphatidylserine decarboxylase proenzyme (232 aa).

The active-site Schiff-base intermediate with substrate; via pyruvic acid is the Ser190. A Pyruvic acid (Ser); by autocatalysis modification is found at Ser190.

Belongs to the phosphatidylserine decarboxylase family. PSD-A subfamily. As to quaternary structure, heterodimer of a large membrane-associated beta subunit and a small pyruvoyl-containing alpha subunit. It depends on pyruvate as a cofactor. Is synthesized initially as an inactive proenzyme. Formation of the active enzyme involves a self-maturation process in which the active site pyruvoyl group is generated from an internal serine residue via an autocatalytic post-translational modification. Two non-identical subunits are generated from the proenzyme in this reaction, and the pyruvate is formed at the N-terminus of the alpha chain, which is derived from the carboxyl end of the proenzyme. The post-translation cleavage follows an unusual pathway, termed non-hydrolytic serinolysis, in which the side chain hydroxyl group of the serine supplies its oxygen atom to form the C-terminus of the beta chain, while the remainder of the serine residue undergoes an oxidative deamination to produce ammonia and the pyruvoyl prosthetic group on the alpha chain.

Its subcellular location is the cell membrane. It catalyses the reaction a 1,2-diacyl-sn-glycero-3-phospho-L-serine + H(+) = a 1,2-diacyl-sn-glycero-3-phosphoethanolamine + CO2. It participates in phospholipid metabolism; phosphatidylethanolamine biosynthesis; phosphatidylethanolamine from CDP-diacylglycerol: step 2/2. Functionally, catalyzes the formation of phosphatidylethanolamine (PtdEtn) from phosphatidylserine (PtdSer). The protein is Phosphatidylserine decarboxylase proenzyme of Rhizobium leguminosarum bv. trifolii (strain WSM2304).